Here is a 407-residue protein sequence, read N- to C-terminus: Accessory Sec system protein translocase subunit SecY2 (407 aa).

10 consecutive transmembrane segments (helical) span residues 13–33, 65–85, 104–124, 133–153, 158–178, 192–212, 248–268, 287–307, 345–365, and 370–390; these read FLWT…TLPF, FFSI…MFTV, MLLT…NLPL, GTIV…LIWL, SSMG…SYIP, PLIL…AVLV, IMYA…LLFF, IPWF…FAFI, FAFV…LLIF, and YMRL…VFSI.

Belongs to the SecY/SEC61-alpha family. SecY2 subfamily. In terms of assembly, may form heterotrimers with SecE and SecG subunits (Potential). Component of the accessory SecA2/SecY2 protein translocase complex required to export cell wall protein GspB.

The protein resides in the cell membrane. The central subunit of a protein translocation channel (Potential). Part of the accessory SecA2/SecY2 system specifically required to export GspB, a serine-rich repeat cell wall protein encoded upstream in the same operon. This Streptococcus gordonii protein is Accessory Sec system protein translocase subunit SecY2.